Consider the following 134-residue polypeptide: Phosphoribosyl-AMP cyclohydrolase (134 aa).

Aspartate 93 lines the Mg(2+) pocket. Cysteine 94 is a binding site for Zn(2+). 2 residues coordinate Mg(2+): aspartate 95 and aspartate 97. The Zn(2+) site is built by cysteine 112 and cysteine 119.

Belongs to the PRA-CH family. In terms of assembly, homodimer. Mg(2+) serves as cofactor. Requires Zn(2+) as cofactor.

It is found in the cytoplasm. It catalyses the reaction 1-(5-phospho-beta-D-ribosyl)-5'-AMP + H2O = 1-(5-phospho-beta-D-ribosyl)-5-[(5-phospho-beta-D-ribosylamino)methylideneamino]imidazole-4-carboxamide. It participates in amino-acid biosynthesis; L-histidine biosynthesis; L-histidine from 5-phospho-alpha-D-ribose 1-diphosphate: step 3/9. Its function is as follows. Catalyzes the hydrolysis of the adenine ring of phosphoribosyl-AMP. This is Phosphoribosyl-AMP cyclohydrolase from Caulobacter sp. (strain K31).